A 197-amino-acid chain; its full sequence is 22.7 kDa class IV heat shock protein (197 aa).

An N-terminal signal peptide occupies residues 1–28 (MSLKPLNMLLVPFLLLILAADFPLKAKA). Residues 68 to 184 (PSITLSHARV…GPRMVSIVEE (117 aa)) form the sHSP domain. A Prevents secretion from ER motif is present at residues 194–197 (DELK).

The protein belongs to the small heat shock protein (HSP20) family. In terms of assembly, forms oligomeric structures.

The protein resides in the endoplasmic reticulum lumen. The sequence is that of 22.7 kDa class IV heat shock protein (HSP22.7) from Pisum sativum (Garden pea).